Here is a 146-residue protein sequence, read N- to C-terminus: Large ribosomal subunit protein uL15 (146 aa).

The disordered stretch occupies residues 1–58 (MRLHELHPAPGSRPRATRVGRGIGSGLGKTSGRGHKGQKARSGGGVRRGFEGGQMPLT). Over residues 21 to 31 (RGIGSGLGKTS) the composition is skewed to gly residues.

Belongs to the universal ribosomal protein uL15 family. Part of the 50S ribosomal subunit.

Its function is as follows. Binds to the 23S rRNA. This is Large ribosomal subunit protein uL15 from Moorella thermoacetica (strain ATCC 39073 / JCM 9320).